The following is a 1869-amino-acid chain: MAQHRCVGGNGGAHTQPSLPALPAHLQSNTHLTGHLASRFHVSLPTAKLSSHAFISINTYTSSSKGQDGGKAGSAQGEAEDMADRAFLRLGHRSENQAILFLGESGSGKTTIRSHILTALLNKTSTPLSTKVSLAAYVFDTLTTTKTATTPTASKAGLFYELQYDTASTTSPLLIGGKLLDHRLERSRITDVPTGERNFHILYYILAGTSAAEKTHLGFGEPDAGTGSKRWRYLGHPTQLKVGINDAQGFQLFKTALRKLEFPRSEIAEICQVLASILHIGQLEFESSENTTVAGDESGGFSHEGGQITTVAKNKDVLAIVAAFLGVSAAELQTTLGYKTKIIHKERVTVMLDPAGARANANELARTLYSLLVAYVIENINQKICAPEEAIVNTVSIIDFPGFSQQSSTGSSLDLLLNNAAAEAMYNLTLQNFFDRKADLLETEEVSVPPTSYFDNSDAVKGLLKTGNGLLSILDDQTRRHRTDMQLLESLRKRFEGKNPAIGVSAATAKLPGSNFLSENTAASFTVRHFAGEVEYSIKGLVEENGEVISGDLLNLVNSTKSDFIARLFGQEALHTVTHPQERTTVMQASVSSKPMRAPSVMSRKIRPGTARTTRQRKESISGRQDTLDDIASERGDSRRPVNKPSEEGASGQFLHSLDNVTKSFHAQNTNAYFVFCLKPNDRRIANQFDSKCVRTQMQTFGIAEISQRIRSADFSVFLPFGEFLGLADVDTLLVGSEREKVEAVVDEKRWPTNEIQIGSTGVFISERCWMEIAQLSDMVTGRFGVPESEGGTPLANMPYGASKERLIAAGNSPYNNDKAKSGYFGSNDIDGRSDAGVSAFGGGDMFKNLDTREQMAERGNEKSMVEVEEFKDSPSRKRWVFITWMLTFFVPEFLIQHLGKMPRKDVRMAWREKLAINFIIWFSCLAAAFILVVFPMLVCPTQYVFTGEETLGLQRKRWKASYAAIRGQVFDIGSFIPSTPCPICHQSALHQYAGTDITGLFPVQVSALCKGTTGSVNPAVLLDYKDTNITDSPNVFNSQDLNSRYHDFRYFTNDTRPDWFSQMMITFRGTYKKGNIGYPAQVVQKMAQQRNAIAILNGRVYDFTKYIAGGAISGSSITNASTDQSLLDFMDPSVVRLFLGPARDDVTPLWDALRLTPTLRKSMQLCLDNLFYLGDVDTRNSVVCNFAKYFILAVTIILCSIIAFKFFAALQFGTKNMPQNLDKFIMCQIPAYTEDEESLRGAIDSAARMRYDDKRKLLIVVCDGMIIGQGNDRPTLRIVLDILGVSETVDPEPLSFESLGEGLKQHNMGKVYSGLYEVQGHIVPFLVVVKVGKPSEVSRPGNRGKRDSQMVIMRFLNRVHYNLPMSPLELEMYHQIRNIIGVNPTFYEYMLQIDADTVVAADSATRFVSAFLDDTRLIACCGETSIANAKSSFITMIQVYEYYISHNLSKAFESLFGSVTCLPGRFSMYRIRAAETGKPLFVSREVVDRYATIRVDTLHMKNLLHLGEDRYLTTLLLKYHNKYKTKYIYRAHAWTIAPDSWKVFLSQRRRWINSTVHNLIELIPMGQLCSFCCFSMRFIVFIDLLSTIIQPFTIAYIVYFIVRMVLTLDLVPVLAFVLLAAVYGLQAIIFILRRKWEMIAWMILYIIAMPIFSFGLPLYAFWHMDDFTWGNTRVVTGEKGKKAVVTDEGKFDPSSIPKKWEEYQSELWDAQTSKDVTRSEASGFSYATKAPVAVSEYGFPGSTPMAHTLPADLGAPRHTTHATHAILASRMSLAHSEMLMAGNRQSQFGGSQFNLPQSGSEMELSNLAGLPSDDALLAEIREILRTADLMTVTKKGVKQELERRFGVNLDSRRAYINSATEALLSGQL.

Residues 1-778 (MAQHRCVGGN…CWMEIAQLSD (778 aa)) form the Myosin motor domain. 103–110 (GESGSGKT) contacts ATP. N-linked (GlcNAc...) asparagine glycosylation is found at Asn122, Asn290, Asn427, and Asn558. Residues 579 to 653 (HPQERTTVMQ…KPSEEGASGQ (75 aa)) form a disordered region. Residues 583–593 (RTTVMQASVSS) are compositionally biased toward polar residues. The tract at residues 658-682 (LDNVTKSFHAQNTNAYFVFCLKPND) is actin-binding. A glycan (N-linked (GlcNAc...) asparagine) is linked at Asn660. The next 2 membrane-spanning stretches (helical) occupy residues 880–900 (WVFITWMLTFFVPEFLIQHLG) and 919–939 (FIIWFSCLAAAFILVVFPMLV). N-linked (GlcNAc...) asparagine glycans are attached at residues Asn1029, Asn1054, and Asn1120. The helical transmembrane segment at 1191 to 1211 (FILAVTIILCSIIAFKFFAAL) threads the bilayer. N-linked (GlcNAc...) asparagine glycosylation is found at Asn1448 and Asn1554. 3 helical membrane passes run 1579 to 1599 (FIVFIDLLSTIIQPFTIAYIV), 1612 to 1632 (VPVLAFVLLAAVYGLQAIIFI), and 1639 to 1659 (MIAWMILYIIAMPIFSFGLPL). The DEK-C domain maps to 1811–1866 (LPSDDALLAEIREILRTADLMTVTKKGVKQELERRFGVNLDSRRAYINSATEALLS).

It in the N-terminal section; belongs to the TRAFAC class myosin-kinesin ATPase superfamily. Myosin family. The protein in the C-terminal section; belongs to the chitin synthase family. Class V subfamily.

The protein localises to the cell membrane. It localises to the cell septum. It is found in the cell tip. The catalysed reaction is [(1-&gt;4)-N-acetyl-beta-D-glucosaminyl](n) + UDP-N-acetyl-alpha-D-glucosamine = [(1-&gt;4)-N-acetyl-beta-D-glucosaminyl](n+1) + UDP + H(+). Polymerizes chitin, a structural polymer of the cell wall and septum, by transferring the sugar moiety of UDP-GlcNAc to the non-reducing end of the growing chitin polymer. Involved in mycelial growth. In Pyricularia grisea (Crabgrass-specific blast fungus), this protein is Chitin synthase csm1.